Reading from the N-terminus, the 238-residue chain is Ribosomal RNA small subunit methyltransferase G (238 aa).

S-adenosyl-L-methionine is bound by residues glycine 77, phenylalanine 82, 128 to 129 (AE), and arginine 147. Residues 219–238 (KKTPARYPRKPGTPNKQPIQ) are disordered.

Belongs to the methyltransferase superfamily. RNA methyltransferase RsmG family.

The protein resides in the cytoplasm. Specifically methylates the N7 position of guanine in position 535 of 16S rRNA. This Geobacillus thermodenitrificans (strain NG80-2) protein is Ribosomal RNA small subunit methyltransferase G.